The sequence spans 297 residues: AKT-interacting protein (297 aa).

The segment covering 1 to 13 (MNLNPFWSMSTNT) has biased composition (polar residues). Positions 1 to 45 (MNLNPFWSMSTNTGRKRSDGEEQSGEQQQQQRASPARPSFGKKQL) are disordered. Residues 25–39 (GEQQQQQRASPARPS) show a composition bias toward low complexity. Residues 79–227 (YLEYSLLAEF…VVDSVKLCNS (149 aa)) form the UBC core domain. Positions 262–297 (KRRPEDHHKGLQVSGLSWVKPGSTQPFSKDDNPPQN) are disordered.

The protein belongs to the ubiquitin-conjugating enzyme family. FTS subfamily.

It localises to the cytoplasm. Its subcellular location is the cell membrane. May function to promote vesicle trafficking and/or fusion. May also regulate apoptosis. The chain is AKT-interacting protein (aktip) from Salmo salar (Atlantic salmon).